The primary structure comprises 150 residues: Large ribosomal subunit protein bL9 (150 aa).

This sequence belongs to the bacterial ribosomal protein bL9 family.

Functionally, binds to the 23S rRNA. The protein is Large ribosomal subunit protein bL9 of Yersinia pseudotuberculosis serotype I (strain IP32953).